The primary structure comprises 1230 residues: MARAKLPRSPSEGKAGPGGAPAGAAAPEEPHGLSPLLPARGGGSVGSDVGQRLPVEDFSLDSSLSQVQVEFYVNENTFKERLKLFFIKNQRSSLRIRLFNFSLKLLTCLLYIVRVLLDDPALGIGCWGCPKQNYSFNDSSSEINWAPILWVERKMTLWAIQVIVAIISFLETMLLIYLSYKGNIWEQIFRVSFVLEMINTLPFIITIFWPPLRNLFIPVFLNCWLAKHALENMINDFHRAILRTQSAMFNQVLILFCTLLCLVFTGTCGIQHLERAGENLSLLTSFYFCIVTFSTVGYGDVTPKIWPSQLLVVIMICVALVVLPLQFEELVYLWMERQKSGGNYSRHRAQTEKHVVLCVSSLKIDLLMDFLNEFYAHPRLQDYYVVILCPTEMDVQVRRVLQIPLWSQRVIYLQGSALKDQDLMRAKMDNGEACFILSSRNEVDRTAADHQTILRAWAVKDFAPNCPLYVQILKPENKFHVKFADHVVCEEECKYAMLALNCICPATSTLITLLVHTSRGQEGQESPEQWQRMYGRCSGNEVYHIRMGDSKFFREYEGKSFTYAAFHAHKKYGVCLIGLKREDNKSILLNPGPRHILAASDTCFYINITKEENSAFIFKQEEKRKKRAFSGQGLHEGPARLPVHSIIASMGTVAMDLQGTEHRPTQSGGGGGGSKLALPTENGSGSRRPSIAPVLELADSSALLPCDLLSDQSEDEVTPSDDEGLSVVEYVKGYPPNSPYIGSSPTLCHLLPVKAPFCCLRLDKGCKHNSYEDAKAYGFKNKLIIVSAETAGNGLYNFIVPLRAYYRSRKELNPIVLLLDNKPDHHFLEAICCFPMVYYMEGSVDNLDSLLQCGIIYADNLVVVDKESTMSAEEDYMADAKTIVNVQTMFRLFPSLSITTELTHPSNMRFMQFRAKDSYSLALSKLEKRERENGSNLAFMFRLPFAAGRVFSISMLDTLLYQSFVKDYMITITRLLLGLDTTPGSGYLCAMKITEGDLWIRTYGRLFQKLCSSSAEIPIGIYRTESHVFSTSESQISVNVEDCEDTREVKGPWGSRAGTGGSSQGRHTGGGDPAEHPLLRRKSLQWARRLSRKAPKQAGRAAAAEWISQQRLSLYRRSERQELSELVKNRMKHLGLPTTGYEDVANLTASDVMNRVNLGYLQDEMNDHQNTLSYVLINPPPDTRLEPSDIVYLIRSDPLAHVASSSQSRKSSCSHKLSSCNPETRDETQL.

Positions M1–L37 are disordered. Over M1–S93 the chain is Cytoplasmic. Residues L94–C126 form a helical membrane-spanning segment. The Extracellular portion of the chain corresponds to W127 to R153. N-linked (GlcNAc...) asparagine glycans are attached at residues N133 and N137. The chain crosses the membrane as a helical span at residues K154 to L178. The Cytoplasmic portion of the chain corresponds to S179–S192. Residues F193–F208 traverse the membrane as a helical segment. Residues W209–L215 are Extracellular-facing. Residues F216–M233 form a helical membrane-spanning segment. Residues I234–S246 lie on the Cytoplasmic side of the membrane. A helical membrane pass occupies residues A247–E274. Residues R275–S281 lie on the Extracellular side of the membrane. An intramembrane region (pore-forming) is located at residues L282–T302. Positions 296 and 297 each coordinate K(+). The Extracellular segment spans residues P303–K304. The chain crosses the membrane as a helical span at residues I305–Q338. The Cytoplasmic portion of the chain corresponds to K339–L1230. The region spanning E352 to V488 is the RCK N-terminal 1 domain. 4 residues coordinate Na(+): L513, H516, S538, and N540. The tract at residues T660–P689 is disordered. Zn(2+) is bound by residues C758 and C759. Residues R761 and K764 each contribute to the K(+) site. Residues R761 and K764 each coordinate Na(+). 2 residues coordinate Zn(2+): C766 and H768. Residues N769, Y771, Y777, and G778 each contribute to the K(+) site. A Na(+)-binding site is contributed by Y771. F779 provides a ligand contact to Na(+). One can recognise an RCK N-terminal 2 domain in the interval N781–L921. K(+)-binding residues include S787, L818, D820, G842, and D865. 2 disordered regions span residues E1048 to L1078 and S1204 to L1230. The span at A1057–D1072 shows a compositional bias: gly residues. A compositionally biased stretch (low complexity) spans S1204–S1219.

This sequence belongs to the potassium channel family. Calcium-activated (TC 1.A.1.3) subfamily. KCa4.1/KCNT1 sub-subfamily. As to quaternary structure, homotetramer; which constitutes the Na(+)-activated K(+) channel. Interacts with KCNT2; these heterodimer channels differ from the homomers in their unitary conductance, kinetic behavior, subcellular localization, and response to activation of protein kinase C. Interacts (via C-terminus) with FMR1; this interaction alters gating properties of KCNT1. Interacts with CRBN via its cytoplasmic C-terminus. In terms of processing, phosphorylated by protein kinase C. Phosphorylation of the C-terminal domain increases channel activity. Highest expression in liver, brain and spinal cord. Lowest expression in skeletal muscle.

The protein resides in the cell membrane. The enzyme catalyses K(+)(in) = K(+)(out). Activated by high intracellular Na(+). In addition to activation by Na(+), is cooperatively activated by intracellular Cl(-) levels. Inhibited by Zn(2+). Activated upon stimulation of G-protein coupled receptors, such as CHRM1 and GRIA1. Its function is as follows. Sodium-activated K(+) channel. Acts as an important mediator of neuronal membrane excitability. Contributes to the delayed outward currents. Regulates neuronal bursting in sensory neurons. Contributes to synaptic development and plasticity. The sequence is that of Potassium channel subfamily T member 1 from Homo sapiens (Human).